The primary structure comprises 212 residues: Thymidylate kinase (212 aa).

10 to 17 (GGEGSGKT) is an ATP binding site.

It belongs to the thymidylate kinase family.

The enzyme catalyses dTMP + ATP = dTDP + ADP. Its function is as follows. Phosphorylation of dTMP to form dTDP in both de novo and salvage pathways of dTTP synthesis. This is Thymidylate kinase from Marinomonas sp. (strain MWYL1).